The sequence spans 448 residues: Fibulin-5 (448 aa).

A signal peptide spans 1–23; sequence MPGIKRILTVTILALCLPSPGNA. An EGF-like 1; calcium-binding domain is found at 42 to 82; it reads DIDECRTIPEACRGDMMCVNQNGGYLCIPRTNPVYRGPYSN. Cystine bridges form between C46–C59, C53–C68, C131–C144, C138–C153, C155–C166, C172–C181, C177–C190, C192–C205, C211–C221, C217–C230, C232–C245, C251–C262, C258–C271, C273–C286, C292–C305, C299–C314, and C320–C332. The short motif at 54–56 is the Cell attachment site element; the sequence is RGD. The EGF-like 2; calcium-binding domain maps to 127-167; sequence DVDECATDSHQCNPTQICINTEGGYTCSCTDGYWLLEGQCL. In terms of domain architecture, EGF-like 3; calcium-binding spans 168–206; that stretch reads DIDECRYGYCQQLCANVPGSYSCTCNPGFTLNEDGRSCQ. The EGF-like 4; calcium-binding domain occupies 207 to 246; the sequence is DVNECATENPCVQTCVNTYGSFICRCDPGYELEEDGVHCS. Positions 245–448 are interaction with LOXL1; that stretch reads CSDMDECSFS…LRIYVSQYPF (204 aa). Residues 247-287 enclose the EGF-like 5; calcium-binding domain; the sequence is DMDECSFSEFLCQHECVNQPGTYFCSCPPGYILLDDNRSCQ. Residues N283 and N296 are each glycosylated (N-linked (GlcNAc...) asparagine). An EGF-like 6; calcium-binding domain is found at 288–333; sequence DINECEHRNHTCNLQQTCYNLQGGFKCIDPIRCEEPYLRISDNRCM.

This sequence belongs to the fibulin family. In terms of assembly, homodimer. Monomer, homodimerizes in presence of Ca(2+). Interacts with ELN. Interacts (via N-terminus) with the integrins ITGAV/ITGB3, ITGAV/ITGB5 and ITGA9/ITGB1. Interacts with FBN1 (via N-terminal domain). Forms a ternary complex with ELN and FBN1. Interacts with EFEMP2 with moderate affinity. Interacts with LOXL1. N-glycosylated. Expressed in skin fibroblasts (at protein level). Expressed predominantly in heart, ovary, and colon but also in kidney, pancreas, testis, lung and placenta. Not detectable in brain, liver, thymus, prostate, or peripheral blood leukocytes.

The protein resides in the secreted. The protein localises to the extracellular space. It is found in the extracellular matrix. In terms of biological role, essential for elastic fiber formation, is involved in the assembly of continuous elastin (ELN) polymer and promotes the interaction of microfibrils and ELN. Stabilizes and organizes elastic fibers in the skin, lung and vasculature. Promotes adhesion of endothelial cells through interaction of integrins and the RGD motif. Vascular ligand for integrin receptors which may play a role in vascular development and remodeling. May act as an adapter that mediates the interaction between FBN1 and ELN. In Homo sapiens (Human), this protein is Fibulin-5 (FBLN5).